Reading from the N-terminus, the 326-residue chain is Gamma-resorcylate decarboxylase (326 aa).

Residues Glu-8, His-10, His-164, and Asp-287 each contribute to the Mn(2+) site. Asp-287 is a catalytic residue.

Belongs to the metallo-dependent hydrolases superfamily. ACMSD family. In terms of assembly, homotetramer. It depends on Mn(2+) as a cofactor.

The catalysed reaction is 2,6-dihydroxybenzoate + H(+) = resorcinol + CO2. It carries out the reaction 2,3-dihydroxybenzoate + H(+) = catechol + CO2. Its pathway is aromatic compound metabolism. With respect to regulation, activity is inhibited by 2-nitroresorcinol (2-NR). In terms of biological role, involved in the gamma-resorcylate (2,6-dihydroxybenzoate) catabolism. Catalyzes the reversible decarboxylation of gamma-resorcylate to resorcinol. Also catalyzes the decarboxylation of 2,3-dihydroxybenzoate to catechol, 2,4,6-trihydroxybenzoate to benzene-1,3,5-triol, and 2,6-dihydroxy-4-methylbenzoate to 5-methylbenzene-1,3-diol. This chain is Gamma-resorcylate decarboxylase, found in Polaromonas sp. (strain JS666 / ATCC BAA-500).